A 129-amino-acid chain; its full sequence is Small ribosomal subunit protein eS6 (129 aa).

This sequence belongs to the eukaryotic ribosomal protein eS6 family.

The polypeptide is Small ribosomal subunit protein eS6 (Methanocorpusculum labreanum (strain ATCC 43576 / DSM 4855 / Z)).